A 378-amino-acid polypeptide reads, in one-letter code: Quinolinate synthase (378 aa).

Residues His59 and Ser80 each contribute to the iminosuccinate site. Cys125 is a [4Fe-4S] cluster binding site. Residues 151–153 and Ser168 contribute to the iminosuccinate site; that span reads YAN. [4Fe-4S] cluster is bound at residue Cys212. Iminosuccinate-binding positions include 238-240 and Thr255; that span reads HPE. Residue Cys309 participates in [4Fe-4S] cluster binding.

The protein belongs to the quinolinate synthase family. Type 1 subfamily. The cofactor is [4Fe-4S] cluster.

Its subcellular location is the cytoplasm. It catalyses the reaction iminosuccinate + dihydroxyacetone phosphate = quinolinate + phosphate + 2 H2O + H(+). Its pathway is cofactor biosynthesis; NAD(+) biosynthesis; quinolinate from iminoaspartate: step 1/1. Catalyzes the condensation of iminoaspartate with dihydroxyacetone phosphate to form quinolinate. The chain is Quinolinate synthase from Burkholderia mallei (strain NCTC 10247).